The sequence spans 315 residues: DNA-directed RNA polymerase subunit alpha (315 aa).

The alpha N-terminal domain (alpha-NTD) stretch occupies residues 1–228 (MLEIEKPKIE…EHFKLFMTLT (228 aa)). The alpha C-terminal domain (alpha-CTD) stretch occupies residues 245–315 (KEKVLEMTIE…LGLGLRKSED (71 aa)).

Belongs to the RNA polymerase alpha chain family. Homodimer. The RNAP catalytic core consists of 2 alpha, 1 beta, 1 beta' and 1 omega subunit. When a sigma factor is associated with the core the holoenzyme is formed, which can initiate transcription.

It carries out the reaction RNA(n) + a ribonucleoside 5'-triphosphate = RNA(n+1) + diphosphate. Functionally, DNA-dependent RNA polymerase catalyzes the transcription of DNA into RNA using the four ribonucleoside triphosphates as substrates. The protein is DNA-directed RNA polymerase subunit alpha of Clostridium botulinum (strain Langeland / NCTC 10281 / Type F).